Here is a 303-residue protein sequence, read N- to C-terminus: Recombination-associated protein RdgC (303 aa).

The protein belongs to the RdgC family.

It is found in the cytoplasm. The protein localises to the nucleoid. Functionally, may be involved in recombination. The polypeptide is Recombination-associated protein RdgC (Shewanella frigidimarina (strain NCIMB 400)).